Here is a 185-residue protein sequence, read N- to C-terminus: MAEGHGDAKGATAHTAADGGHKAPFPPFQKETFASQLVSLTIAFVALYLIVSKIILPRVGGVIEERQKTIEGDLAAAQKLKGESDDALKAYEAELAQARSRAQAIGAETREKLNAAAEAERKTLEQRLAAKIADAEKTISATRTAAMGNVRGIASEAAAAIVQQLAGIQPDSKALDSAVNASIKG.

The segment at 1–23 (MAEGHGDAKGATAHTAADGGHKA) is disordered. Residues 9–18 (KGATAHTAAD) show a composition bias toward low complexity. Residues 37-57 (LVSLTIAFVALYLIVSKIILP) traverse the membrane as a helical segment.

Belongs to the ATPase B chain family. In terms of assembly, F-type ATPases have 2 components, F(1) - the catalytic core - and F(0) - the membrane proton channel. F(1) has five subunits: alpha(3), beta(3), gamma(1), delta(1), epsilon(1). F(0) has three main subunits: a(1), b(2) and c(10-14). The alpha and beta chains form an alternating ring which encloses part of the gamma chain. F(1) is attached to F(0) by a central stalk formed by the gamma and epsilon chains, while a peripheral stalk is formed by the delta and b chains.

It is found in the cell inner membrane. In terms of biological role, f(1)F(0) ATP synthase produces ATP from ADP in the presence of a proton or sodium gradient. F-type ATPases consist of two structural domains, F(1) containing the extramembraneous catalytic core and F(0) containing the membrane proton channel, linked together by a central stalk and a peripheral stalk. During catalysis, ATP synthesis in the catalytic domain of F(1) is coupled via a rotary mechanism of the central stalk subunits to proton translocation. Functionally, component of the F(0) channel, it forms part of the peripheral stalk, linking F(1) to F(0). The b'-subunit is a diverged and duplicated form of b found in plants and photosynthetic bacteria. This chain is ATP synthase subunit b 2 (atpF2), found in Rhodopseudomonas palustris (strain BisB5).